A 570-amino-acid polypeptide reads, in one-letter code: Molecular chaperone MKKS (570 aa).

192 to 199 (ERMVLGKS) is a binding site for ATP. Residues 198–370 (KSIIVPLKGQ…FHLLPNEATV (173 aa)) form a substrate-binding apical domain region.

This sequence belongs to the TCP-1 chaperonin family. As to quaternary structure, component of a complex composed at least of MKKS, BBS10, BBS12, TCP1, CCT2, CCT3, CCT4, CCT5 and CCT8. Interacts with STUB1. Interacts with BBS2 (via coiled coil domain). Interacts with CCDC28B. Interacts with BBS12. Interacts with SMARCC1, a component of the SWI/SNF complexes; the interaction takes place predominantly in the cytoplasm and may modulate SMARCC1 location. Interacts with DLEC1. As to expression, widely expressed in adult and fetal tissues. Expressed in the developing heart, brain retina, limb buds, as well as in the developing neural tube. Expressed in the embryo in the first and second branchial arches. Expressed in parafin embedded tissue sections of brain, kidney, retina, olfactory epithelium and the ependymal layer of ventricles. Detected only in restricted regions of these tissue sections, including the ciliated border of renal tubules, the connecting cilium and the inner and outer nuclear layers of retina, and the ciliated layer of olfactory epithelia.

Its subcellular location is the cytoplasm. The protein localises to the cytoskeleton. It localises to the microtubule organizing center. The protein resides in the centrosome. It is found in the cytosol. Its subcellular location is the nucleus. Functionally, probable molecular chaperone that assists the folding of proteins upon ATP hydrolysis. Plays a role in the assembly of BBSome, a complex involved in ciliogenesis regulating transports vesicles to the cilia. May play a role in protein processing in limb, cardiac and reproductive system development. May play a role in cytokinesis. The chain is Molecular chaperone MKKS (Mkks) from Mus musculus (Mouse).